Consider the following 158-residue polypeptide: NAD(P)H-quinone oxidoreductase subunit J, chloroplastic (158 aa).

It belongs to the complex I 30 kDa subunit family. NDH is composed of at least 16 different subunits, 5 of which are encoded in the nucleus.

It localises to the plastid. Its subcellular location is the chloroplast thylakoid membrane. The enzyme catalyses a plastoquinone + NADH + (n+1) H(+)(in) = a plastoquinol + NAD(+) + n H(+)(out). The catalysed reaction is a plastoquinone + NADPH + (n+1) H(+)(in) = a plastoquinol + NADP(+) + n H(+)(out). Functionally, NDH shuttles electrons from NAD(P)H:plastoquinone, via FMN and iron-sulfur (Fe-S) centers, to quinones in the photosynthetic chain and possibly in a chloroplast respiratory chain. The immediate electron acceptor for the enzyme in this species is believed to be plastoquinone. Couples the redox reaction to proton translocation, and thus conserves the redox energy in a proton gradient. This chain is NAD(P)H-quinone oxidoreductase subunit J, chloroplastic, found in Gossypium barbadense (Sea Island cotton).